The sequence spans 36 residues: uncharacterized protein (36 aa).

This is an uncharacterized protein from Haemophilus influenzae (strain ATCC 51907 / DSM 11121 / KW20 / Rd).